The sequence spans 339 residues: Zinc metalloprotease MJ0392 (339 aa).

2 consecutive transmembrane segments (helical) span residues 10 to 30 and 33 to 53; these read IMGI…VIIG and IMNN…SVVL. Position 54 (His-54) interacts with Zn(2+). Glu-55 is an active-site residue. Residue His-58 coordinates Zn(2+). 2 consecutive transmembrane segments (helical) span residues 96–116 and 125–145; these read IAGP…SQFF and LLYT…IPAF. Asp-148 is a Zn(2+) binding site. 2 helical membrane passes run 180–200 and 251–271; these read IMLL…SLFV and YFGY…IGNI. 2 consecutive CBS domains span residues 226–281 and 281–335; these read MTPN…VRDY and YMEK…ELKE.

It belongs to the peptidase M50B family. Monomer. Requires Zn(2+) as cofactor.

Its subcellular location is the cell membrane. With respect to regulation, inhibited by 1,10-phenanthroline. In terms of biological role, a site-2 regulated intramembrane protease (S2P) that cleaves type-2 transmembrane proteins within their membrane-spanning domains; its endogenous substrate is unknown. Regulated intramembrane proteolysis (RIP) occurs when an extracytoplasmic signal triggers a concerted proteolytic cascade to transmit information and elicit cellular responses. A membrane-spanning regulatory substrate protein is first cut extracytoplasmically (site-1 protease, S1P), then within the membrane itself (site-2 protease, S2P, this enzyme), while cytoplasmic proteases finish degrading the regulatory protein, liberating the effector protein. Possible signals, S1P and substrates are unknown in this organism. In Methanocaldococcus jannaschii (strain ATCC 43067 / DSM 2661 / JAL-1 / JCM 10045 / NBRC 100440) (Methanococcus jannaschii), this protein is Zinc metalloprotease MJ0392.